Here is a 362-residue protein sequence, read N- to C-terminus: 3-dehydroquinate synthase (362 aa).

Residues 71-76, 105-109, 129-130, Lys142, and Lys151 each bind NAD(+); these read DGEKYK, GVIGD, and TT. 3 residues coordinate Zn(2+): Glu184, His248, and His265.

Belongs to the sugar phosphate cyclases superfamily. Dehydroquinate synthase family. Co(2+) is required as a cofactor. It depends on Zn(2+) as a cofactor. The cofactor is NAD(+).

The protein resides in the cytoplasm. It catalyses the reaction 7-phospho-2-dehydro-3-deoxy-D-arabino-heptonate = 3-dehydroquinate + phosphate. It participates in metabolic intermediate biosynthesis; chorismate biosynthesis; chorismate from D-erythrose 4-phosphate and phosphoenolpyruvate: step 2/7. Its function is as follows. Catalyzes the conversion of 3-deoxy-D-arabino-heptulosonate 7-phosphate (DAHP) to dehydroquinate (DHQ). In Hamiltonella defensa subsp. Acyrthosiphon pisum (strain 5AT), this protein is 3-dehydroquinate synthase.